The following is a 254-amino-acid chain: Transmembrane protein 269 (254 aa).

Helical transmembrane passes span 44–64 (IINA…FCSF), 69–89 (YCAS…GTMT), 113–135 (LASA…IYVL), 171–191 (LTKG…LFMI), and 210–230 (IVYI…TAFY).

Its subcellular location is the membrane. This chain is Transmembrane protein 269, found in Mus musculus (Mouse).